A 138-amino-acid chain; its full sequence is Ribosome-binding factor A (138 aa).

The protein belongs to the RbfA family. As to quaternary structure, monomer. Binds 30S ribosomal subunits, but not 50S ribosomal subunits or 70S ribosomes.

It is found in the cytoplasm. Functionally, one of several proteins that assist in the late maturation steps of the functional core of the 30S ribosomal subunit. Associates with free 30S ribosomal subunits (but not with 30S subunits that are part of 70S ribosomes or polysomes). Required for efficient processing of 16S rRNA. May interact with the 5'-terminal helix region of 16S rRNA. This chain is Ribosome-binding factor A, found in Sodalis glossinidius (strain morsitans).